Reading from the N-terminus, the 555-residue chain is Dihydroxy-acid dehydratase (555 aa).

Asp80 is a Mg(2+) binding site. Cys121 is a [2Fe-2S] cluster binding site. Asp122 and Lys123 together coordinate Mg(2+). Residue Lys123 is modified to N6-carboxylysine. Position 193 (Cys193) interacts with [2Fe-2S] cluster. Position 444 (Glu444) interacts with Mg(2+). Catalysis depends on Ser470, which acts as the Proton acceptor.

It belongs to the IlvD/Edd family. As to quaternary structure, homodimer. [2Fe-2S] cluster is required as a cofactor. It depends on Mg(2+) as a cofactor.

The catalysed reaction is (2R)-2,3-dihydroxy-3-methylbutanoate = 3-methyl-2-oxobutanoate + H2O. It carries out the reaction (2R,3R)-2,3-dihydroxy-3-methylpentanoate = (S)-3-methyl-2-oxopentanoate + H2O. It functions in the pathway amino-acid biosynthesis; L-isoleucine biosynthesis; L-isoleucine from 2-oxobutanoate: step 3/4. It participates in amino-acid biosynthesis; L-valine biosynthesis; L-valine from pyruvate: step 3/4. Functions in the biosynthesis of branched-chain amino acids. Catalyzes the dehydration of (2R,3R)-2,3-dihydroxy-3-methylpentanoate (2,3-dihydroxy-3-methylvalerate) into 2-oxo-3-methylpentanoate (2-oxo-3-methylvalerate) and of (2R)-2,3-dihydroxy-3-methylbutanoate (2,3-dihydroxyisovalerate) into 2-oxo-3-methylbutanoate (2-oxoisovalerate), the penultimate precursor to L-isoleucine and L-valine, respectively. The polypeptide is Dihydroxy-acid dehydratase (Aquifex aeolicus (strain VF5)).